We begin with the raw amino-acid sequence, 96 residues long: Cytoplasmic envelopment protein 3 (96 aa).

Gly2 carries the N-myristoyl glycine; by host lipid modification. Residues 37–43 (DIESEEE) are asp/Glu-rich (acidic). Ser40 bears the Phosphoserine mark. Positions 50-96 (PDVRVVTRAPGPQYRRPSDPPSRHTRRRDPDVARPPATLTPPLSDSE) are disordered. The span at 65 to 81 (RPSDPPSRHTRRRDPDV) shows a compositional bias: basic and acidic residues.

Belongs to the herpesviridae cytoplasmic envelopment protein 3 family. As to quaternary structure, interacts with cytoplasmic envelopment protein 2; this interaction is essential for the proper localization of each protein to the assembly complex and thus for the production of infectious virus. Interacts with gE (via C-terminus). Interacts with gD (via C-terminus). Interacts with UL56. In terms of processing, myristoylation and palmitoylation (probably on one or more of the nearby cysteines at the N-terminus) enable membrane-binding and Golgi apparatus-specific targeting and are essential for efficient packaging. Post-translationally, phosphorylated. Phosphorylation does not seem to be required for recycling to the host Golgi apparatus. Packaging is selective for underphosphorylated forms.

The protein localises to the virion tegument. It is found in the virion membrane. The protein resides in the host cell membrane. Its subcellular location is the host Golgi apparatus membrane. In terms of biological role, plays an important role in the cytoplasmic envelopment of tegument proteins and capsids during the assembly and egress processes. Also participates in viral entry at the fusion step probably by regulating the core fusion machinery. This chain is Cytoplasmic envelopment protein 3, found in Homo sapiens (Human).